Consider the following 298-residue polypeptide: UDP-N-acetylenolpyruvoylglucosamine reductase (298 aa).

The FAD-binding PCMH-type domain maps to Arg-26–Gly-190. Arg-170 is an active-site residue. Ser-219 (proton donor) is an active-site residue. Glu-289 is a catalytic residue.

This sequence belongs to the MurB family. Requires FAD as cofactor.

The protein resides in the cytoplasm. The enzyme catalyses UDP-N-acetyl-alpha-D-muramate + NADP(+) = UDP-N-acetyl-3-O-(1-carboxyvinyl)-alpha-D-glucosamine + NADPH + H(+). The protein operates within cell wall biogenesis; peptidoglycan biosynthesis. Functionally, cell wall formation. The sequence is that of UDP-N-acetylenolpyruvoylglucosamine reductase from Alkalilimnicola ehrlichii (strain ATCC BAA-1101 / DSM 17681 / MLHE-1).